Reading from the N-terminus, the 213-residue chain is Putative manganese efflux pump MntP (213 aa).

Transmembrane regions (helical) follow at residues 6-26, 34-54, 58-78, 107-127, 132-152, 153-173, and 192-212; these read LGVLAVGLGADAFSMALGIGM, AFMLGLVVALFHIFMPWFGIL, ALGLVVGRLASFIGAAVLFFL, GSGGGAIVGAGAIVGGRLFAP, LVVIGAAVSMDALSVGFSLGT, VGAQLLPTVLTFGVVAGIMTV, and LAGGLILLGIGIKLLLGSASP.

It belongs to the MntP (TC 9.B.29) family.

It is found in the cell membrane. Probably functions as a manganese efflux pump. The chain is Putative manganese efflux pump MntP from Heliobacterium modesticaldum (strain ATCC 51547 / Ice1).